The chain runs to 434 residues: Histidinol dehydrogenase (434 aa).

Positions 130, 188, and 211 each coordinate NAD(+). Serine 237, glutamine 259, and histidine 262 together coordinate substrate. 2 residues coordinate Zn(2+): glutamine 259 and histidine 262. Active-site proton acceptor residues include glutamate 326 and histidine 327. 4 residues coordinate substrate: histidine 327, aspartate 360, glutamate 414, and histidine 419. Position 360 (aspartate 360) interacts with Zn(2+). Histidine 419 provides a ligand contact to Zn(2+).

This sequence belongs to the histidinol dehydrogenase family. Homodimer. The cofactor is Zn(2+).

It catalyses the reaction L-histidinol + 2 NAD(+) + H2O = L-histidine + 2 NADH + 3 H(+). Its pathway is amino-acid biosynthesis; L-histidine biosynthesis; L-histidine from 5-phospho-alpha-D-ribose 1-diphosphate: step 9/9. Catalyzes the sequential NAD-dependent oxidations of L-histidinol to L-histidinaldehyde and then to L-histidine. In Salmonella typhi, this protein is Histidinol dehydrogenase.